The sequence spans 702 residues: Ribosomal RNA large subunit methyltransferase K/L (702 aa).

In terms of domain architecture, THUMP spans 43–154 (LIYQSLMWSR…KETASIALDL (112 aa)).

It belongs to the methyltransferase superfamily. RlmKL family.

It is found in the cytoplasm. The enzyme catalyses guanosine(2445) in 23S rRNA + S-adenosyl-L-methionine = N(2)-methylguanosine(2445) in 23S rRNA + S-adenosyl-L-homocysteine + H(+). The catalysed reaction is guanosine(2069) in 23S rRNA + S-adenosyl-L-methionine = N(2)-methylguanosine(2069) in 23S rRNA + S-adenosyl-L-homocysteine + H(+). In terms of biological role, specifically methylates the guanine in position 2445 (m2G2445) and the guanine in position 2069 (m7G2069) of 23S rRNA. This Salmonella schwarzengrund (strain CVM19633) protein is Ribosomal RNA large subunit methyltransferase K/L.